The chain runs to 341 residues: L-threonine 3-dehydrogenase (341 aa).

C38 provides a ligand contact to Zn(2+). Residues T40 and H43 each act as charge relay system in the active site. Zn(2+)-binding residues include H63, E64, C93, C96, C99, and C107. NAD(+) is bound by residues I175, D195, R200, 262–264, and 286–287; these read LGI and IY.

The protein belongs to the zinc-containing alcohol dehydrogenase family. Homotetramer. Zn(2+) serves as cofactor.

It localises to the cytoplasm. It carries out the reaction L-threonine + NAD(+) = (2S)-2-amino-3-oxobutanoate + NADH + H(+). The protein operates within amino-acid degradation; L-threonine degradation via oxydo-reductase pathway; glycine from L-threonine: step 1/2. Functionally, catalyzes the NAD(+)-dependent oxidation of L-threonine to 2-amino-3-ketobutyrate. The sequence is that of L-threonine 3-dehydrogenase from Shewanella sp. (strain ANA-3).